Consider the following 309-residue polypeptide: Extracellular agarase (309 aa).

The segment at residues 1–30 (MVNRRDLIKWSAVALGAGAGLAGPAPAAHA) is a signal peptide (tat-type signal). Residues 33 to 309 (LEWEQYPVPA…YRWVRTYQAV (277 aa)) enclose the GH16 domain. Catalysis depends on glutamate 155, which acts as the Nucleophile. Glutamate 160 serves as the catalytic Proton donor.

This sequence belongs to the glycosyl hydrolase 16 family. Predicted to be exported by the Tat system. The position of the signal peptide cleavage has been experimentally proven.

The protein resides in the secreted. The enzyme catalyses Hydrolysis of (1-&gt;4)-beta-D-galactosidic linkages in agarose, giving the tetramer as the predominant product.. This is Extracellular agarase (dagA) from Streptomyces coelicolor (strain ATCC BAA-471 / A3(2) / M145).